The following is a 93-amino-acid chain: uncharacterized protein (93 aa).

The tract at residues 35–72 (KSVPPPTPPKPVKKTPSPTLPKPSKQKQEPQVEVNEDR) is disordered. Over residues 60–72 (QKQEPQVEVNEDR) the composition is skewed to basic and acidic residues.

This is an uncharacterized protein from Ostreid herpesvirus 1 (isolate France) (OsHV-1).